A 378-amino-acid polypeptide reads, in one-letter code: Mannitol-1-phosphate 5-dehydrogenase (378 aa).

Position 4-15 (4-15 (SVHFGAGNIGRG)) interacts with NAD(+).

The protein belongs to the mannitol dehydrogenase family.

It carries out the reaction D-mannitol 1-phosphate + NAD(+) = beta-D-fructose 6-phosphate + NADH + H(+). In Streptococcus pneumoniae serotype 4 (strain ATCC BAA-334 / TIGR4), this protein is Mannitol-1-phosphate 5-dehydrogenase.